A 181-amino-acid chain; its full sequence is Transcription termination/antitermination protein NusG (181 aa).

Positions 130-161 constitute a KOW domain; sequence PGEMVRVNDGPFADFNGVVEEVDYEKSRLKVS.

This sequence belongs to the NusG family. In terms of assembly, monomer. Interacts with the transcription termination factor Rho and with RNA polymerase.

Its function is as follows. Participates in transcription elongation, termination and antitermination. In the absence of Rho, increases the rate of transcription elongation by the RNA polymerase (RNAP), probably by partially suppressing pausing. In the presence of Rho, modulates most Rho-dependent termination events by interacting with the RNAP to render the complex more susceptible to the termination activity of Rho. May be required to overcome a kinetic limitation of Rho to function at certain terminators. Also involved in ribosomal RNA transcriptional antitermination. The chain is Transcription termination/antitermination protein NusG from Salmonella typhi.